The primary structure comprises 594 residues: UvrABC system protein C (594 aa).

The GIY-YIG domain occupies 13–99; that stretch reads NSSGVYQYFD…IKQLKPKYNI (87 aa). The region spanning 205-240 is the UVR domain; sequence DRLIKELELKMERLSNNLRFEEALIYRDRIAKIQKI.

Belongs to the UvrC family. In terms of assembly, interacts with UvrB in an incision complex.

It is found in the cytoplasm. Its function is as follows. The UvrABC repair system catalyzes the recognition and processing of DNA lesions. UvrC both incises the 5' and 3' sides of the lesion. The N-terminal half is responsible for the 3' incision and the C-terminal half is responsible for the 5' incision. The sequence is that of UvrABC system protein C from Helicobacter pylori (strain ATCC 700392 / 26695) (Campylobacter pylori).